Reading from the N-terminus, the 168-residue chain is Mediator of RNA polymerase II transcription subunit 7b (168 aa).

The span at 1–12 (MATATYPPPPPY) shows a compositional bias: pro residues. The tract at residues 1 to 33 (MATATYPPPPPYYRLYKDFSENTDSAPEPPPPI) is disordered. 2 coiled-coil regions span residues 64-92 (KDSNLDYKKELRSLNRELQLHILELADVL) and 132-162 (IMELQIQQRKQAVEDIKRRREEAQGLLKDAF).

The protein belongs to the Mediator complex subunit 7 family. As to quaternary structure, component of the Mediator complex. Interacts with MEE14/CBP1.

It is found in the nucleus. Its function is as follows. Component of the Mediator complex, a coactivator involved in the regulated transcription of nearly all RNA polymerase II-dependent genes. Mediator functions as a bridge to convey information from gene-specific regulatory proteins to the basal RNA polymerase II transcription machinery. The Mediator complex, having a compact conformation in its free form, is recruited to promoters by direct interactions with regulatory proteins and serves for the assembly of a functional pre-initiation complex with RNA polymerase II and the general transcription factors. The protein is Mediator of RNA polymerase II transcription subunit 7b (MED7B) of Arabidopsis thaliana (Mouse-ear cress).